A 91-amino-acid polypeptide reads, in one-letter code: DNA-directed RNA polymerase subunit omega (91 aa).

It belongs to the RNA polymerase subunit omega family. The RNAP catalytic core consists of 2 alpha, 1 beta, 1 beta' and 1 omega subunit. When a sigma factor is associated with the core the holoenzyme is formed, which can initiate transcription.

The enzyme catalyses RNA(n) + a ribonucleoside 5'-triphosphate = RNA(n+1) + diphosphate. Functionally, promotes RNA polymerase assembly. Latches the N- and C-terminal regions of the beta' subunit thereby facilitating its interaction with the beta and alpha subunits. In Pectobacterium carotovorum subsp. carotovorum (strain PC1), this protein is DNA-directed RNA polymerase subunit omega.